The following is a 338-amino-acid chain: Diacylglycerol acyltransferase/mycolyltransferase Ag85A (338 aa).

Residues 1 to 42 (MQLVDRVRGAVTGMSRRLVVGAVGAALVSGLVGAVGGTATAG) form the signal peptide. 85–86 (LR) provides a ligand contact to substrate. The tract at residues 101 to 111 (FEWYDQSGLSV) is fibronectin-binding. C130 and C135 are joined by a disulfide. Substrate contacts are provided by S169 and D197. Residue S169 is the Nucleophile of the active site. Residue E273 is part of the active site. Residues 275–278 (FVRT), K282, and 305–307 (HSW) contribute to the substrate site. H305 is an active-site residue.

The protein belongs to the mycobacterial A85 antigen family. As to quaternary structure, homodimer.

It localises to the secreted. It is found in the cell wall. Its subcellular location is the cytoplasm. It catalyses the reaction an acyl-CoA + a 1,2-diacyl-sn-glycerol = a triacyl-sn-glycerol + CoA. The catalysed reaction is 2 alpha,alpha'-trehalose 6-mycolate = alpha,alpha'-trehalose 6,6'-bismycolate + alpha,alpha-trehalose. Its function is as follows. The antigen 85 proteins (FbpA, FbpB, FbpC) are responsible for the high affinity of mycobacteria for fibronectin, a large adhesive glycoprotein, which facilitates the attachment of M.tuberculosis to murine alveolar macrophages (AMs). They also help to maintain the integrity of the cell wall by catalyzing the transfer of mycolic acids to cell wall arabinogalactan, and through the synthesis of alpha,alpha-trehalose dimycolate (TDM, cord factor). They catalyze the transfer of a mycoloyl residue from one molecule of alpha,alpha-trehalose monomycolate (TMM) to another TMM, leading to the formation of TDM. FbpA mediates triacylglycerol (TAG) formation with long-chain acyl-CoA as the acyl donor and 1,2-dipalmitoyl-sn-glycerol (1,2-dipalmitin) as the acyl acceptor. It has a preference for C26:0-CoA over C18:1-CoA. The protein is Diacylglycerol acyltransferase/mycolyltransferase Ag85A (fbpA) of Mycobacterium bovis (strain ATCC BAA-935 / AF2122/97).